The chain runs to 86 residues: U15-lycotoxin-Ls1c (86 aa).

An N-terminal signal peptide occupies residues 1–20; that stretch reads MNSKIFAVLLLLAFLSCVLS. The region spanning 21 to 66 is the WAP domain; the sequence is DQYCPKSSITACKKMNIRNDCCKDDDCTGGSWCCATPCGNICKYPT. Cystine bridges form between Cys24/Cys54, Cys32/Cys58, Cys41/Cys53, Cys42/Cys80, and Cys47/Cys62.

The protein belongs to the venom protein 11 family. 01 (wap-1) subfamily. Post-translationally, contains 5 disulfide bonds. Expressed by the venom gland.

The protein localises to the secreted. In terms of biological role, has antibacterial activity. The sequence is that of U15-lycotoxin-Ls1c from Lycosa singoriensis (Wolf spider).